The following is a 338-amino-acid chain: Ketol-acid reductoisomerase (NADP(+)) (338 aa).

The region spanning 1-181 (MKVFYDKDAD…GGGRAGIIET (181 aa)) is the KARI N-terminal Rossmann domain. Residues 24–27 (YGSQ), arginine 47, and serine 52 contribute to the NADP(+) site. Histidine 107 is an active-site residue. Glycine 133 lines the NADP(+) pocket. The 146-residue stretch at 182–327 (NFREETETDL…EKLRAMMPWI (146 aa)) folds into the KARI C-terminal knotted domain. Residues aspartate 190, glutamate 194, glutamate 226, and glutamate 230 each coordinate Mg(2+). Substrate is bound at residue serine 251.

It belongs to the ketol-acid reductoisomerase family. It depends on Mg(2+) as a cofactor.

The catalysed reaction is (2R)-2,3-dihydroxy-3-methylbutanoate + NADP(+) = (2S)-2-acetolactate + NADPH + H(+). It carries out the reaction (2R,3R)-2,3-dihydroxy-3-methylpentanoate + NADP(+) = (S)-2-ethyl-2-hydroxy-3-oxobutanoate + NADPH + H(+). The protein operates within amino-acid biosynthesis; L-isoleucine biosynthesis; L-isoleucine from 2-oxobutanoate: step 2/4. Its pathway is amino-acid biosynthesis; L-valine biosynthesis; L-valine from pyruvate: step 2/4. Its function is as follows. Involved in the biosynthesis of branched-chain amino acids (BCAA). Catalyzes an alkyl-migration followed by a ketol-acid reduction of (S)-2-acetolactate (S2AL) to yield (R)-2,3-dihydroxy-isovalerate. In the isomerase reaction, S2AL is rearranged via a Mg-dependent methyl migration to produce 3-hydroxy-3-methyl-2-ketobutyrate (HMKB). In the reductase reaction, this 2-ketoacid undergoes a metal-dependent reduction by NADPH to yield (R)-2,3-dihydroxy-isovalerate. This chain is Ketol-acid reductoisomerase (NADP(+)), found in Cupriavidus pinatubonensis (strain JMP 134 / LMG 1197) (Cupriavidus necator (strain JMP 134)).